A 935-amino-acid chain; its full sequence is MDIGLITNKEDDEENDLSIKSPYSTTKNQNNNKTKDEIIKKDFISNINYSNNNIYSNIYNNIFNNIFNKFNTNNNNNNTTNNNPNNNNNNNNNNPNYNNNNPNYNNNDNNPNNNNNNNNNNNNNNNNNNNNKNYINNKNYINNNNINYINNNNNNNNNNNNNNNNNNNNNNNNNNNNNNNNNTSNNTSFNKQNNYNNNNYNSNSSSRSNNSNNNNNNNNNDDNIYNNGKNYIPNNGIINNHSNNDINNSYNNNNNIQNYYYKKNNNENKKKNNDNENNNYPNFNNNNNYNNYNNNDNIINNNNNNNNNNINNNINNNINNINNINNNNNKIIRQHPYINNENQQKHQKKIQHQENSNFEQLEKPEQLSHNSESSKTTILNENNSYLKNDKIMLSPTQQQQQQQQQQQQQQQQQYLISSSKYGYNNQNNNNNNGNSNQESILEKKKKIRKTRYFENEYQKLHESNIKNINNNNSNNNNNNNNNNNNNNNNNIYNEEELSLNTSSPIQSQSQYQVIYPHQQCPSSPTSSSTSTSSTTSSSSSSSSSSSSSSSSSTSSTSTITTTTTITTQSTFQNQIQLPQPSPYNQFTATFINSSNGFIKKKEKDAKKQIKVVTTLLIQHLISNNVTKFNVRLIESLLNVDFFKLKEILDIMECSKLVRNDKCNNYVWLGLDNPEFLNFALSTFHSKINFITKNSEFFCDNCKLNSENGVILNSPILQFSNVSPTLLSPSSSTSSETTTSTSTTTNNTSTTTISPSSNVSVNNSYSLVNMSDLYNGGSGGGSSGGGGSGGGVNNNNNVQNNINSGRKFRYKETELSTTVSQFLKLLLSDKCLTIHDVCFNFNPNIEKTHDNYISLRNSAKIKRCYDIANVFEAINLVQKSKSVEETRTQNYKWIGTTVLTNEYCQNNCPYILQENYIQQQQQLQLQQQQNQPKPPR.

Disordered regions lie at residues 1 to 32 (MDIG…QNNN), 74 to 228 (NNNN…YNNG), 265 to 287 (NNEN…NNNN), 342 to 376 (NQQK…SSKT), 394 to 414 (SPTQ…QQQY), 466 to 491 (KNIN…NNNI), 516 to 559 (PHQQ…TSTI), 727 to 755 (SPSS…ISPS), and 778 to 799 (GGGS…NVQN). Low complexity predominate over residues 74–227 (NNNNNTTNNN…NNNDDNIYNN (154 aa)). A coiled-coil region spans residues 262–331 (KKNNNENKKK…NNINNNNNKI (70 aa)). Residues 265 to 274 (NNENKKKNND) show a composition bias toward basic and acidic residues. The span at 275 to 287 (NENNNYPNFNNNN) shows a compositional bias: low complexity. The segment covering 367 to 376 (LSHNSESSKT) has biased composition (polar residues). Positions 397–414 (QQQQQQQQQQQQQQQQQY) are enriched in low complexity. Positions 522-559 (SSPTSSSTSTSSTTSSSSSSSSSSSSSSSSSTSSTSTI) are enriched in low complexity. Positions 778 to 791 (GGGSSGGGGSGGGV) are enriched in gly residues.

This is an uncharacterized protein from Dictyostelium discoideum (Social amoeba).